A 61-amino-acid chain; its full sequence is Potassium channel toxin alpha-KTx 5.3 (61 aa).

The first 28 residues, 1–28 (MHNYYKIVLIMVAFFAVIITFSNIQVEG), serve as a signal peptide directing secretion. 3 disulfide bridges follow: Cys-31-Cys-49, Cys-36-Cys-54, and Cys-40-Cys-56. The segment at 34-37 (KRCQ) is [R/K]XCQ motif. His-59 bears the Histidine amide mark.

This sequence belongs to the short scorpion toxin superfamily. Potassium channel inhibitor family. Alpha-KTx 05 subfamily. In terms of tissue distribution, expressed by the venom gland.

It is found in the secreted. Blocks small conductance calcium-activated potassium channels (KCNN, SK). Has also been shown to weakly inhibit Kv11.1/KCNH2/ERG1, Kv1.2/KCNA2, Kv1.3/KCNA3 and Kv2.1/KCNB1 voltage-gated potassium channels. The polypeptide is Potassium channel toxin alpha-KTx 5.3 (Olivierus martensii (Manchurian scorpion)).